Consider the following 392-residue polypeptide: tRNA (guanine-N(7)-)-methyltransferase (392 aa).

Glu-123, Glu-148, and Asp-175 together coordinate S-adenosyl-L-methionine. 2 residues coordinate substrate: Lys-201 and Asp-231.

The protein belongs to the class I-like SAM-binding methyltransferase superfamily. TrmB family.

It carries out the reaction guanosine(46) in tRNA + S-adenosyl-L-methionine = N(7)-methylguanosine(46) in tRNA + S-adenosyl-L-homocysteine. It functions in the pathway tRNA modification; N(7)-methylguanine-tRNA biosynthesis. Its function is as follows. Catalyzes the formation of N(7)-methylguanine at position 46 (m7G46) in tRNA. This Campylobacter jejuni subsp. jejuni serotype O:2 (strain ATCC 700819 / NCTC 11168) protein is tRNA (guanine-N(7)-)-methyltransferase.